The following is a 119-amino-acid chain: UPF0342 protein GK0640 (119 aa).

It belongs to the UPF0342 family.

This is UPF0342 protein GK0640 from Geobacillus kaustophilus (strain HTA426).